A 1544-amino-acid polypeptide reads, in one-letter code: Protein mahjong (1544 aa).

The interval 1-110 is disordered; that stretch reads MSEGSGSENA…AAADRRQATK (110 aa). Residues 10-35 show a composition bias toward low complexity; the sequence is AAAAEAAAEAEAATEAALMAEAVAVA. The segment covering 38 to 91 has biased composition (acidic residues); the sequence is SDEEEQPEAEDMPEQAGDNQEEDAAEQQDGGEPEADEDADADDAMSVENAENES. Residues serine 565 and serine 569 each carry the phosphoserine modification. In terms of domain architecture, LisH spans 912–944; it reads NKQQLYQLIFEHLESNGLSQTAQMLQREVGLPL. Disordered regions lie at residues 946 to 973 and 987 to 1059; these read TPTTRSFHQSPFDYKSLPSGSSSLSRNR and GNGD…LAED. Residue serine 955 is modified to Phosphoserine. The segment covering 961–971 has biased composition (low complexity); the sequence is SLPSGSSSLSR. Residues 1016 to 1027 show a composition bias toward polar residues; that stretch reads PNFSSLNTTQTP. 2 consecutive short sequence motifs (DWD box) follow at residues 1302-1309 and 1338-1345; these read VLWDVRSG and EVWDLRTF. Disordered stretches follow at residues 1447-1475 and 1487-1544; these read KSERSEEEDDEEVPESDEDGSDTGSENTF and LRNL…SSDD. Acidic residues-rich tracts occupy residues 1451–1467 and 1495–1535; these read SEEEDDEEVPESDEDGS and NDDE…DVLE.

It belongs to the VPRBP/DCAF1 family. Component of the CUL4-RBX1-DDB1-DCAF1 E3 ubiquitin-protein ligase complex. Interacts with l(2)gl.

The protein localises to the nucleus. The protein operates within protein modification; protein ubiquitination. Functionally, probable substrate recognition component of tsome E3 ubiquitin-protein ligase complex. Plays a key role in cell competition via its interaction with l(2)gl. The sequence is that of Protein mahjong (mahj) from Drosophila melanogaster (Fruit fly).